The sequence spans 483 residues: Altronate oxidoreductase (483 aa).

18–29 serves as a coordination point for NAD(+); the sequence is IIQFGEGNFLRA.

This sequence belongs to the mannitol dehydrogenase family. UxaB subfamily.

The enzyme catalyses D-altronate + NAD(+) = keto-D-tagaturonate + NADH + H(+). The protein operates within carbohydrate metabolism; pentose and glucuronate interconversion. In Klebsiella pneumoniae subsp. pneumoniae (strain ATCC 700721 / MGH 78578), this protein is Altronate oxidoreductase.